The sequence spans 130 residues: Small ribosomal subunit protein uS9 (130 aa).

Belongs to the universal ribosomal protein uS9 family.

This Pasteurella multocida (strain Pm70) protein is Small ribosomal subunit protein uS9.